The following is a 241-amino-acid chain: N-acetylmuramoyl-L-alanine amidase Rv3717 (241 aa).

An N-terminal signal peptide occupies residues 1-24 (MIVGVLVAAATPIISSASATPANI). The region spanning 29-230 (VFIDPGHNGA…KYANALVRGV (202 aa)) is the MurNAc-LAA domain. Residue His35 participates in Zn(2+) binding. Residues 45–69 (RQVPTGRGGTKNCQASGTSTNSGYP) form a disordered region. Over residues 55-67 (KNCQASGTSTNSG) the composition is skewed to polar residues. An intrachain disulfide couples Cys57 to Cys105. The Zn(2+) site is built by Glu70 and His125. The active-site Proton donor/acceptor is the Glu200.

It belongs to the N-acetylmuramoyl-L-alanine amidase 3 family. As to quaternary structure, monomer. Zn(2+) is required as a cofactor.

It is found in the periplasm. It carries out the reaction Hydrolyzes the link between N-acetylmuramoyl residues and L-amino acid residues in certain cell-wall glycopeptides.. It participates in cell wall degradation; peptidoglycan degradation. The structure reveals a short flexible hairpin turn that partially occludes the active site and may be involved in autoregulation. Its function is as follows. Cell-wall hydrolase that hydrolyzes the amide bond between N-acetylmuramic acid and L-alanine in cell-wall glycopeptides. Is able to hydrolyze the cell walls of several bacterial species (i.e. Paenibacillus sp., B.avium, E.coli DH5alpha, E.aerogenes, L.acidophilus, B.thuringiensis, B.pumilus, B.subtilis and E.coli W3110), thereby showing that it is a cell-wall hydrolase with broad-spectrum activity. May have a role in peptidoglycan fragment recycling. The protein is N-acetylmuramoyl-L-alanine amidase Rv3717 of Mycobacterium tuberculosis (strain ATCC 25618 / H37Rv).